The chain runs to 296 residues: Ribosomal RNA small subunit methyltransferase A (296 aa).

Residues Asn30, Leu32, Gly57, Glu78, Asp103, and Asn128 each contribute to the S-adenosyl-L-methionine site.

It belongs to the class I-like SAM-binding methyltransferase superfamily. rRNA adenine N(6)-methyltransferase family. RsmA subfamily.

It localises to the cytoplasm. It carries out the reaction adenosine(1518)/adenosine(1519) in 16S rRNA + 4 S-adenosyl-L-methionine = N(6)-dimethyladenosine(1518)/N(6)-dimethyladenosine(1519) in 16S rRNA + 4 S-adenosyl-L-homocysteine + 4 H(+). Functionally, specifically dimethylates two adjacent adenosines (A1518 and A1519) in the loop of a conserved hairpin near the 3'-end of 16S rRNA in the 30S particle. May play a critical role in biogenesis of 30S subunits. The sequence is that of Ribosomal RNA small subunit methyltransferase A from Macrococcus caseolyticus (strain JCSC5402) (Macrococcoides caseolyticum).